A 445-amino-acid chain; its full sequence is Amino-acid acetyltransferase (445 aa).

The N-acetyltransferase domain occupies 299 to 438 (EQVRQAQIDD…QGLYNYQRNS (140 aa)).

This sequence belongs to the acetyltransferase family. ArgA subfamily.

Its subcellular location is the cytoplasm. The catalysed reaction is L-glutamate + acetyl-CoA = N-acetyl-L-glutamate + CoA + H(+). The protein operates within amino-acid biosynthesis; L-arginine biosynthesis; N(2)-acetyl-L-ornithine from L-glutamate: step 1/4. This chain is Amino-acid acetyltransferase, found in Vibrio atlanticus (strain LGP32) (Vibrio splendidus (strain Mel32)).